Reading from the N-terminus, the 615-residue chain is Dihydroxy-acid dehydratase (615 aa).

Asp81 is a Mg(2+) binding site. Residue Cys122 coordinates [2Fe-2S] cluster. Residues Asp123 and Lys124 each coordinate Mg(2+). N6-carboxylysine is present on Lys124. Cys195 provides a ligand contact to [2Fe-2S] cluster. Position 491 (Glu491) interacts with Mg(2+). Ser517 functions as the Proton acceptor in the catalytic mechanism.

This sequence belongs to the IlvD/Edd family. Homodimer. [2Fe-2S] cluster serves as cofactor. Mg(2+) is required as a cofactor.

The enzyme catalyses (2R)-2,3-dihydroxy-3-methylbutanoate = 3-methyl-2-oxobutanoate + H2O. The catalysed reaction is (2R,3R)-2,3-dihydroxy-3-methylpentanoate = (S)-3-methyl-2-oxopentanoate + H2O. Its pathway is amino-acid biosynthesis; L-isoleucine biosynthesis; L-isoleucine from 2-oxobutanoate: step 3/4. It participates in amino-acid biosynthesis; L-valine biosynthesis; L-valine from pyruvate: step 3/4. Functions in the biosynthesis of branched-chain amino acids. Catalyzes the dehydration of (2R,3R)-2,3-dihydroxy-3-methylpentanoate (2,3-dihydroxy-3-methylvalerate) into 2-oxo-3-methylpentanoate (2-oxo-3-methylvalerate) and of (2R)-2,3-dihydroxy-3-methylbutanoate (2,3-dihydroxyisovalerate) into 2-oxo-3-methylbutanoate (2-oxoisovalerate), the penultimate precursor to L-isoleucine and L-valine, respectively. In Novosphingobium aromaticivorans (strain ATCC 700278 / DSM 12444 / CCUG 56034 / CIP 105152 / NBRC 16084 / F199), this protein is Dihydroxy-acid dehydratase.